The following is a 160-amino-acid chain: Sulfur-rich protein (160 aa).

2 consecutive transmembrane segments (helical) span residues Ile-62–Leu-82 and Phe-91–Met-111.

It is found in the membrane. This is Sulfur-rich protein (srp) from Chlamydia caviae (strain ATCC VR-813 / DSM 19441 / 03DC25 / GPIC) (Chlamydophila caviae).